Reading from the N-terminus, the 310-residue chain is Olfactory receptor 5P54 (310 aa).

The Extracellular segment spans residues 1–25 (MNGGNHTSMTELFILGPTEDPTFCI). The N-linked (GlcNAc...) asparagine glycan is linked to N5. Residues 26–46 (AFFVIFLGVYMVTLVGNISII) traverse the membrane as a helical segment. Residues 47–54 (TLIRISSQ) are Cytoplasmic-facing. A helical transmembrane segment spans residues 55-75 (LHTPVYLFLNHLAFVDILYST). The Extracellular segment spans residues 76 to 99 (LVSVIMLMELLEHELALPVAACAA). C97 and C189 are oxidised to a cystine. Residues 100 to 120 (ELCITVLFGSSECFLLAAMAY) traverse the membrane as a helical segment. The Cytoplasmic segment spans residues 121–133 (DCYVAICSPLLYS). The chain crosses the membrane as a helical span at residues 134-154 (TLMSSRVCFLLLGMSYVGGCM). At 155–196 (NGWIFTGCLLNLSFYGPYQIDHFFCDFSPLLKLSCSDVSIIG) the chain is on the extracellular side. N165 is a glycosylation site (N-linked (GlcNAc...) asparagine). The helical transmembrane segment at 197–217 (IIPSISSGSIIVVTVLVIAVF) threads the bilayer. Residues 218–237 (YICILMTILKMHSTDGCHKA) lie on the Cytoplasmic side of the membrane. Residues 238 to 258 (FSTCNSYLTAVTLYYGTITFI) form a helical membrane-spanning segment. Residues 259–271 (YVMPKSNYSTEKN) are Extracellular-facing. N-linked (GlcNAc...) asparagine glycosylation occurs at N265. A helical membrane pass occupies residues 272-292 (KVLSEFYTVVIPMLNHLIYSL). At 293–310 (KNRDVKDALRKAIVRVYT) the chain is on the cytoplasmic side.

Belongs to the G-protein coupled receptor 1 family.

It localises to the cell membrane. Potential odorant receptor. In Mus musculus (Mouse), this protein is Olfactory receptor 5P54.